A 158-amino-acid chain; its full sequence is NADH-quinone oxidoreductase subunit B (158 aa).

[4Fe-4S] cluster contacts are provided by Cys37, Cys38, Cys102, and Cys132.

Belongs to the complex I 20 kDa subunit family. NDH-1 is composed of 14 different subunits. Subunits NuoB, C, D, E, F, and G constitute the peripheral sector of the complex. The cofactor is [4Fe-4S] cluster.

The protein resides in the cell inner membrane. It carries out the reaction a quinone + NADH + 5 H(+)(in) = a quinol + NAD(+) + 4 H(+)(out). NDH-1 shuttles electrons from NADH, via FMN and iron-sulfur (Fe-S) centers, to quinones in the respiratory chain. Couples the redox reaction to proton translocation (for every two electrons transferred, four hydrogen ions are translocated across the cytoplasmic membrane), and thus conserves the redox energy in a proton gradient. This chain is NADH-quinone oxidoreductase subunit B, found in Nitrosomonas europaea (strain ATCC 19718 / CIP 103999 / KCTC 2705 / NBRC 14298).